The sequence spans 252 residues: Pyridoxine 5'-phosphate synthase (252 aa).

Asn8 and Arg19 together coordinate 3-amino-2-oxopropyl phosphate. The active-site Proton acceptor is His44. Residues Arg46 and His51 each contribute to the 1-deoxy-D-xylulose 5-phosphate site. The Proton acceptor role is filled by Glu75. Thr110 serves as a coordination point for 1-deoxy-D-xylulose 5-phosphate. His201 (proton donor) is an active-site residue. Residues Asp202 and 224–225 (GH) contribute to the 3-amino-2-oxopropyl phosphate site.

This sequence belongs to the PNP synthase family. Homooctamer; tetramer of dimers.

The protein resides in the cytoplasm. The catalysed reaction is 3-amino-2-oxopropyl phosphate + 1-deoxy-D-xylulose 5-phosphate = pyridoxine 5'-phosphate + phosphate + 2 H2O + H(+). It functions in the pathway cofactor biosynthesis; pyridoxine 5'-phosphate biosynthesis; pyridoxine 5'-phosphate from D-erythrose 4-phosphate: step 5/5. Functionally, catalyzes the complicated ring closure reaction between the two acyclic compounds 1-deoxy-D-xylulose-5-phosphate (DXP) and 3-amino-2-oxopropyl phosphate (1-amino-acetone-3-phosphate or AAP) to form pyridoxine 5'-phosphate (PNP) and inorganic phosphate. The polypeptide is Pyridoxine 5'-phosphate synthase (Albidiferax ferrireducens (strain ATCC BAA-621 / DSM 15236 / T118) (Rhodoferax ferrireducens)).